We begin with the raw amino-acid sequence, 122 residues long: Large ribosomal subunit protein uL22 (122 aa).

The protein belongs to the universal ribosomal protein uL22 family. In terms of assembly, part of the 50S ribosomal subunit.

Functionally, this protein binds specifically to 23S rRNA; its binding is stimulated by other ribosomal proteins, e.g. L4, L17, and L20. It is important during the early stages of 50S assembly. It makes multiple contacts with different domains of the 23S rRNA in the assembled 50S subunit and ribosome. Its function is as follows. The globular domain of the protein is located near the polypeptide exit tunnel on the outside of the subunit, while an extended beta-hairpin is found that lines the wall of the exit tunnel in the center of the 70S ribosome. The sequence is that of Large ribosomal subunit protein uL22 from Prochlorococcus marinus (strain MIT 9303).